The sequence spans 156 residues: Ribosomal RNA large subunit methyltransferase H (156 aa).

S-adenosyl-L-methionine is bound by residues L73, G104, and 123-128; that span reads LSSLTL.

The protein belongs to the RNA methyltransferase RlmH family. As to quaternary structure, homodimer.

The protein resides in the cytoplasm. It catalyses the reaction pseudouridine(1915) in 23S rRNA + S-adenosyl-L-methionine = N(3)-methylpseudouridine(1915) in 23S rRNA + S-adenosyl-L-homocysteine + H(+). Its function is as follows. Specifically methylates the pseudouridine at position 1915 (m3Psi1915) in 23S rRNA. This is Ribosomal RNA large subunit methyltransferase H from Ralstonia pickettii (strain 12J).